The sequence spans 356 residues: Probable D-xylulose reductase A (356 aa).

Residues cysteine 45, histidine 70, and glutamate 71 each coordinate Zn(2+). Residue 180–185 (GAGPVG) participates in NAD(+) binding.

Belongs to the zinc-containing alcohol dehydrogenase family. It depends on Zn(2+) as a cofactor.

The catalysed reaction is xylitol + NAD(+) = D-xylulose + NADH + H(+). Its pathway is carbohydrate degradation; L-arabinose degradation via L-arabinitol; D-xylulose 5-phosphate from L-arabinose (fungal route): step 4/5. In terms of biological role, xylitol dehydrogenase which catalyzes the conversion of xylitol to D-xylulose. Xylose is a major component of hemicelluloses such as xylan. Most fungi utilize D-xylose via three enzymatic reactions, xylose reductase (XR), xylitol dehydrogenase (XDH), and xylulokinase, to form xylulose 5-phosphate, which enters pentose phosphate pathway. The polypeptide is Probable D-xylulose reductase A (xdhA) (Arthroderma otae (strain ATCC MYA-4605 / CBS 113480) (Microsporum canis)).